Consider the following 268-residue polypeptide: MTHEYPDGTCAVCGLSLRVKEGESVVVLGPNGSGKTTLLHHILGLLTPTKGHIRVLGHDLPDGVREVRKRIGVVFQDVDDQLIMPTVLEDVAFGLVNRGMPREEAFERAREILERLGIEDLEDRPPQFLSGGQKRLVALAGAVAPEPDLLILDEPTSGLDFRATRLFVRLIRELKEELGFTMILTTFDVDIAAALAERVVVIREGKTVAEGSPEDILTDVDLIRESGLKPPEHVELLRRLGIENPPLDISEAEELLVAMLGEESRGNP.

An ABC transporter domain is found at 1–229; sequence MTHEYPDGTC…VDLIRESGLK (229 aa). An ATP-binding site is contributed by 29–36; that stretch reads GPNGSGKT.

Belongs to the ABC transporter superfamily.

It localises to the cell membrane. Its function is as follows. Probably part of an ABC transporter complex. Responsible for energy coupling to the transport system. In Methanopyrus kandleri (strain AV19 / DSM 6324 / JCM 9639 / NBRC 100938), this protein is Putative ABC transporter ATP-binding protein MK0182.